Consider the following 218-residue polypeptide: Zinc metalloproteinase-disintegrin-like bothrojarin-2 (218 aa).

Positions 14 to 100 (PPVCGNELLE…QCPTDDFHKN (87 aa)) constitute a Disintegrin domain. 5 residues coordinate Ca(2+): V16, L21, E23, E26, and D29. 10 disulfides stabilise this stretch: C28-C46, C30-C41, C40-C63, C54-C60, C59-C85, C72-C92, C79-C111, C104-C116, C123-C173, and C151-C161. The D/ECD-tripeptide signature appears at 78-80 (ECD).

It belongs to the venom metalloproteinase (M12B) family. P-III subfamily. P-IIIa sub-subfamily. As to quaternary structure, monomer. Requires Zn(2+) as cofactor. Glycosylated. In terms of tissue distribution, expressed by the venom gland.

Its subcellular location is the secreted. Its function is as follows. The hemorrhagic metalloproteinase-disintegrin-like bothrojarin-1 is a potent inhibitor of collagen-induced platelet aggregation by blockage of alpha-2/beta-1 (ITGA2/ITGB1) integrin. It does not present any fibrinogen-clotting activity. This Bothrops jararaca (Jararaca) protein is Zinc metalloproteinase-disintegrin-like bothrojarin-2.